A 368-amino-acid chain; its full sequence is DNA replication and repair protein RecF (368 aa).

30-37 is an ATP binding site; sequence GNNAQGKT.

Belongs to the RecF family.

It is found in the cytoplasm. In terms of biological role, the RecF protein is involved in DNA metabolism; it is required for DNA replication and normal SOS inducibility. RecF binds preferentially to single-stranded, linear DNA. It also seems to bind ATP. The chain is DNA replication and repair protein RecF from Streptococcus pyogenes serotype M12 (strain MGAS9429).